A 694-amino-acid polypeptide reads, in one-letter code: MAFDALFKPIEIGNLTIRNRVVSTAHAEVHATDGGMTTERYVKYYEEKAKGGCGLCICGGSSPVSIDSPQAWWSSVNISTDRIIPHFQNLADAVHKHGGKIMIQITHMGRRSRWDGFDWPTLLSPSGIREPVHRSTCKTIEEEEIWRVIDDFAQGARRVKEGGLDGIELSAVHQHLIDQFWSPRVNKREDQWGGSFENRMRFGLEVLKAVRAEVGDDFVVGLRICGDEFHPDGLTHDDMKRIAAYYDATGMVDFFGVVGSGCDTHNTLANVIPNMSYPPEPFLHLAAGVKDVVSVPVIHAQNIKDPNQASRILEGGYVDLVGMTRAHIADPHLIAKIQMDQTDRIRQCVGANYCIDRQYQGLDVLCIQNAATSREYLGLPHEIAPSDGPKRKVVVVGGGPGGMEAARVAAERGHEVTLFEAADQIGGQITLAAKAPQRDQIAGITRWYQLELARLKVDLRLGTRADEATIADLRPDIVVLATGGQPFLSQVPEWGYDEDRERSLVVSTWDILSGAVEPGKNVLIFDSICEFAGVSAADYLADKGATVEIVTDDIKPGAAVGGTTFPTYYRSLYEKEVIMTSDLALHRVYREGDALVAVLENEYTGAQEERVVDQVVVENGVRPDEALYYALKDQSRNKGQVDIEALYAIQPQPALATLDDDADAGFVLFRLGDCTAPRNTHAAIYDALRICKDF.

This sequence in the N-terminal section; belongs to the NADH:flavin oxidoreductase/NADH oxidase family. As to quaternary structure, monomer. The purified enzyme exists in the form of a monomer, dimer or polymer under non-denaturing conditions, but only the monomeric protein exhibits enzyme activity. Requires FAD as cofactor. NAD(+) is required as a cofactor. NADP(+) serves as cofactor.

The protein resides in the cytoplasm. The catalysed reaction is oxidized 2[4Fe-4S]-[ferredoxin] + N,N-dimethylglycine + H2O = reduced 2[4Fe-4S]-[ferredoxin] + sarcosine + formaldehyde + 2 H(+). The enzyme catalyses oxidized 2[4Fe-4S]-[ferredoxin] + sarcosine + H2O = reduced 2[4Fe-4S]-[ferredoxin] + formaldehyde + glycine + 2 H(+). With respect to regulation, ca(2+) increases the activity by 12%, while the other metal ions tested have no or slightly inhibitory effects. The chelating agent EDTA inhibits the activity by 33%. Its function is as follows. Involved in degradation of glycine betaine. Catalyzes the demethylation of both N,N-dimethylglycine (DMG) and sarcosine, releasing formaldehyde and forming glycine as the final product. Does not show activity toward trimethylamine (TMA), histamine, glycine betaine (GB) or choline. The C-N bond in DMG is probably oxidized by removal of a hydride equivalent to form a labile imine intermediate, which is then spontaneously hydrolyzed in the presence of water, producing sarcosine and formaldehyde. The two protons subtracted from DMG are transferred to the non-covalently bound FAD, resulting in the reduced form of FAD, which is subsequently reoxidized by coupling with reduction of the enzyme-bound NAD(P)(+). Regeneration of NAD(P)(+) is achieved by electron transfer to the [4Fe-4S] cluster in the probable membrane-anchored ferredoxin csal_0991. The sequence is that of N,N-dimethylglycine/sarcosine dehydrogenase from Chromohalobacter salexigens (strain ATCC BAA-138 / DSM 3043 / CIP 106854 / NCIMB 13768 / 1H11).